The following is a 660-amino-acid chain: Bifunctional polymyxin resistance protein ArnA (660 aa).

Residues 1–304 form a formyltransferase ArnAFT region; sequence MKAVIFAYHD…TLGLVAGARL (304 aa). Catalysis depends on histidine 104, which acts as the Proton donor; for formyltransferase activity. Residues arginine 114 and 136-140 contribute to the (6R)-10-formyltetrahydrofolate site; that span reads VKRAD. The dehydrogenase ArnADH stretch occupies residues 314–660; it reads RRIRVLILGV…RSVDIAERAS (347 aa). Residues aspartate 347 and 368–369 each bind NAD(+); that span reads DI. UDP-alpha-D-glucuronate contacts are provided by residues alanine 393, tyrosine 398, and 432 to 433; that span reads TS. Residue glutamate 434 is the Proton acceptor; for decarboxylase activity of the active site. UDP-alpha-D-glucuronate-binding positions include arginine 460, asparagine 492, 526 to 535, and tyrosine 613; that span reads KLIDGGQQKR. Arginine 619 functions as the Proton donor; for decarboxylase activity in the catalytic mechanism.

It in the N-terminal section; belongs to the Fmt family. UDP-L-Ara4N formyltransferase subfamily. The protein in the C-terminal section; belongs to the NAD(P)-dependent epimerase/dehydratase family. UDP-glucuronic acid decarboxylase subfamily. Homohexamer, formed by a dimer of trimers.

It carries out the reaction UDP-alpha-D-glucuronate + NAD(+) = UDP-beta-L-threo-pentopyranos-4-ulose + CO2 + NADH. The catalysed reaction is UDP-4-amino-4-deoxy-beta-L-arabinose + (6R)-10-formyltetrahydrofolate = UDP-4-deoxy-4-formamido-beta-L-arabinose + (6S)-5,6,7,8-tetrahydrofolate + H(+). It functions in the pathway nucleotide-sugar biosynthesis; UDP-4-deoxy-4-formamido-beta-L-arabinose biosynthesis; UDP-4-deoxy-4-formamido-beta-L-arabinose from UDP-alpha-D-glucuronate: step 1/3. It participates in nucleotide-sugar biosynthesis; UDP-4-deoxy-4-formamido-beta-L-arabinose biosynthesis; UDP-4-deoxy-4-formamido-beta-L-arabinose from UDP-alpha-D-glucuronate: step 3/3. The protein operates within bacterial outer membrane biogenesis; lipopolysaccharide biosynthesis. Bifunctional enzyme that catalyzes the oxidative decarboxylation of UDP-glucuronic acid (UDP-GlcUA) to UDP-4-keto-arabinose (UDP-Ara4O) and the addition of a formyl group to UDP-4-amino-4-deoxy-L-arabinose (UDP-L-Ara4N) to form UDP-L-4-formamido-arabinose (UDP-L-Ara4FN). The modified arabinose is attached to lipid A and is required for resistance to polymyxin and cationic antimicrobial peptides. In Salmonella schwarzengrund (strain CVM19633), this protein is Bifunctional polymyxin resistance protein ArnA.